Here is a 1003-residue protein sequence, read N- to C-terminus: MGACSSKAQHQTRDPEPREQQAAQEQKSTGPSGAPNDAPAPAEAERKMSGSSATAPKGEMPTASTGTPEQQQQQQQQQQQQQEQQQHPEHQQSEKQQQHGEEQQQERKPSQQQQNEEAAAPHKHGGERKVQKAIKQQEDTQAEDARLLGHLEKREKTPSDLSLIRDSLSTNLVCSSLNDAEVEALANAVEFFTFKKGDVVTKQGESGSYFFIVHSGEFEVIVNDKVVNKILTGQAFGEISLIHNSARTATIKTLSEDAALWGVQRQVFRETLKQLSSRNFAENRQFLASVKFFEMLTEAQKNVITNALVVQSFQPGQAIVKEGEKGDVLYILKSGKALVSIKNKEVRVLQRGEYFGERALLYDEPRSATITAEEPTVCVSIGRDLLDRVLGNLQHVLFRNIMLEALQQSKVFASFPTEQLSRLIGSVVVKDYPENYIILDRENRTRASASALFSAQGVRFFFVLEGEVSVFAYKDKSSSSSSSSSSSSSSSSAEGEMELHLIDTLKRGQAFGDEYVLSPNKPFAHCVKSNGPTKLALLTASALTATLGGQDIDETLDYNNKLAITKKMYIFRYLSEQQTQTLIKAFKTVRYTQGESIIREGEIGSRFFIIKLGEVVILKGEKRVRTLGRHDYFGERALLHDERRSATVAANSPEVDLWVVDKDVFLQIVKGPMLTHLEERIRMQDTKVEFKDLNVVRVVGRGTFGTVKLVQHIPTQMRYALKCVSRKSVVALNQQDHIRLEREIMAENDHPFIIRLVRTFRDKEFLYFLTELVTGGELYDAIRKLGLLGRYQAQFYLASIVLAIEYLHERNIAYRDLKPENILLDSQGYVKLIDFGCAKKMQGRAYTLVGTPHYMAPEVILGKGYTLTADTWAFGVCLYEFMCGPLPFGNDAEDQLEIFRDILAGKLIFPHYVTDQDAINLMKRLLCRLPEVRIGCSINGYKDIKEHAFFSDFDWDRLAGRDLSPPLLPKGEIYAEDAEEGGLDIEEDEGIELEDEYEWDKDF.

Positions 1–141 (MGACSSKAQH…KAIKQQEDTQ (141 aa)) are disordered. A lipid anchor (N-myristoyl glycine) is attached at G2. Residue C4 is the site of S-palmitoyl cysteine attachment. Low complexity predominate over residues 69-85 (EQQQQQQQQQQQQQEQQ). Basic and acidic residues-rich tracts occupy residues 86-109 (QHPE…ERKP) and 127-141 (ERKV…EDTQ). 4 cNMP-binding domain regions span residues 173 to 289 (VCSS…FLAS), 292 to 391 (FFEM…RVLG), 411 to 548 (VFAS…ATLG), and 570 to 669 (IFRY…LQIV). The 3',5'-cyclic GMP site is built by G237, E238, R247, and T248. R625, G634, E635, A637, R644, and S645 together coordinate 3',5'-cyclic GMP. In terms of domain architecture, Protein kinase spans 693–950 (LNVVRVVGRG…YKDIKEHAFF (258 aa)). Residues 699–707 (VGRGTFGTV) and K722 contribute to the ATP site. The Proton acceptor role is filled by D816. Residues 951-1003 (SDFDWDRLAGRDLSPPLLPKGEIYAEDAEEGGLDIEEDEGIELEDEYEWDKDF) enclose the AGC-kinase C-terminal domain.

It belongs to the protein kinase superfamily. AGC Ser/Thr protein kinase family. cGMP subfamily. As to quaternary structure, monomer. Requires Mg(2+) as cofactor.

Its subcellular location is the cell membrane. The protein localises to the cytoplasm. The catalysed reaction is L-seryl-[protein] + ATP = O-phospho-L-seryl-[protein] + ADP + H(+). The enzyme catalyses L-threonyl-[protein] + ATP = O-phospho-L-threonyl-[protein] + ADP + H(+). With respect to regulation, activated by cGMP. The cGMP-binding domains acts cooperatively to activate PKG. Inhibited by the antiparasitic small molecule 4-[2-(4-fluorophenyl)-5-(1-methylpiperidine-4-yl)-1Hpyrrol- 3-yl]pyridine (compound 1). In terms of biological role, serine/threonine protein kinase which acts as a downstream effector of the second messenger cGMP. In Eimeria tenella (Coccidian parasite), this protein is cGMP-dependent protein kinase.